The following is a 167-amino-acid chain: SsrA-binding protein (167 aa).

The segment at 137-167 (GKQSHDKRDAAKERDWQRDKQRVMRRHNRDA) is disordered. The span at 139–158 (QSHDKRDAAKERDWQRDKQR) shows a compositional bias: basic and acidic residues.

This sequence belongs to the SmpB family.

The protein localises to the cytoplasm. Required for rescue of stalled ribosomes mediated by trans-translation. Binds to transfer-messenger RNA (tmRNA), required for stable association of tmRNA with ribosomes. tmRNA and SmpB together mimic tRNA shape, replacing the anticodon stem-loop with SmpB. tmRNA is encoded by the ssrA gene; the 2 termini fold to resemble tRNA(Ala) and it encodes a 'tag peptide', a short internal open reading frame. During trans-translation Ala-aminoacylated tmRNA acts like a tRNA, entering the A-site of stalled ribosomes, displacing the stalled mRNA. The ribosome then switches to translate the ORF on the tmRNA; the nascent peptide is terminated with the 'tag peptide' encoded by the tmRNA and targeted for degradation. The ribosome is freed to recommence translation, which seems to be the essential function of trans-translation. The protein is SsrA-binding protein of Xanthomonas campestris pv. campestris (strain 8004).